We begin with the raw amino-acid sequence, 362 residues long: Dihydroorotate dehydrogenase (quinone) (362 aa).

FMN is bound by residues 62-66 (AGYDK) and Thr-86. Substrate is bound at residue Lys-66. Substrate is bound at residue 111 to 115 (NRLGF). Residues Asn-139 and Asn-170 each coordinate FMN. Residue Asn-170 coordinates substrate. Ser-173 (nucleophile) is an active-site residue. Position 175 (Asn-175) interacts with substrate. FMN contacts are provided by Lys-215 and Ser-243. 244-245 (NT) contacts substrate. Residues Gly-266, Gly-295, and 316–317 (YS) contribute to the FMN site.

It belongs to the dihydroorotate dehydrogenase family. Type 2 subfamily. Monomer. It depends on FMN as a cofactor.

It is found in the cell membrane. It carries out the reaction (S)-dihydroorotate + a quinone = orotate + a quinol. The protein operates within pyrimidine metabolism; UMP biosynthesis via de novo pathway; orotate from (S)-dihydroorotate (quinone route): step 1/1. In terms of biological role, catalyzes the conversion of dihydroorotate to orotate with quinone as electron acceptor. This Rhizobium meliloti (strain 1021) (Ensifer meliloti) protein is Dihydroorotate dehydrogenase (quinone).